The chain runs to 601 residues: MEHVTEGSWESLPVPLHPKVLSVLRELGFPYMTPVQSATIPLFMKNKDVAAEAVTGSGKTLAFVIPIEEILLRREEKFKKSQVGAIIITPTRELAVQIEEVLSHFTKPFPQFSQILWIGGRNPGEDVARFKELGGNIIVATPGRLEDMFRRKAEGLDLASCVRSLEVLVLDEADRLLDMGFETSINTILEFLPKQRRTGLFSATQTQEVENLVRAGLRNPVRISVKEKGVAASSTQKTPSRLENHYMVCKADEKFNQLVHFLRNHKQEKHLVFFSTCACVEYYGKALETLVKGVKIMCIHGKMKYKRNKIFMEFRKLQSGILVCTDVMARGIDIPEVNWVLQYDPPSNASAFVHRCGRTARIGHGGSALVFLLPMEESYISFLAINQKCPLQEMKLQKNTADLLPKLKAMALGDRAVFEKGMKAFVSYVQAYAKHECNLIFRLKDLDFASLARGFALLRMPKMPELRGKQFPDFVPVDVNTDTIPFKDKIREKQRQKQLLEQQRKEKTENDGRRKFIKNKAWSKQKAKKEKKKKLTEKRKREEGSDVEDEDMEELLNDTRLLKKFKKGKITEEEFEKGLLTSGKRSTNKADLEISDLEDDC.

Positions 9–37 (WESLPVPLHPKVLSVLRELGFPYMTPVQS) match the Q motif motif. Residues 40–223 (IPLFMKNKDV…RAGLRNPVRI (184 aa)) form the Helicase ATP-binding domain. 53–60 (AVTGSGKT) lines the ATP pocket. The DEAD box motif lies at 171–174 (DEAD). Residues 254 to 402 (KFNQLVHFLR…EMKLQKNTAD (149 aa)) form the Helicase C-terminal domain. Basic and acidic residues predominate over residues 502-514 (QQRKEKTENDGRR). Disordered regions lie at residues 502–553 (QQRK…EDME) and 576–601 (EKGL…EDDC). The span at 515–538 (KFIKNKAWSKQKAKKEKKKKLTEK) shows a compositional bias: basic residues. The segment at 534–563 (KLTEKRKREEGSDVEDEDMEELLNDTRLLK) is important for nuclear localization. 2 positions are modified to phosphoserine: S545 and S595.

Belongs to the DEAD box helicase family. DDX55/SPB4 subfamily. As to quaternary structure, interacts with 28S rRNA. Interacts with double-stranded RNA substrates in vitro; the interaction stimulates ATPase activity.

It is found in the nucleus. The protein localises to the nucleoplasm. It carries out the reaction ATP + H2O = ADP + phosphate + H(+). Functionally, probable ATP-binding RNA helicase. Has ATPase activity and is involved in the maturation of precursor large subunit rRNAs. The chain is ATP-dependent RNA helicase DDX55 (DDX55) from Bos taurus (Bovine).